Consider the following 715-residue polypeptide: Polyribonucleotide nucleotidyltransferase (715 aa).

Residues aspartate 493 and aspartate 499 each coordinate Mg(2+). The 60-residue stretch at 560–619 (PRMITIKINPEKIRDVIGKGGSVIRALTEETGTTIDISDDGVVTIASTSSEGMAEAKKRI) folds into the KH domain. The region spanning 629–697 (GQVYEGTVLK…EKGRVRLSAK (69 aa)) is the S1 motif domain.

The protein belongs to the polyribonucleotide nucleotidyltransferase family. Requires Mg(2+) as cofactor.

It localises to the cytoplasm. The catalysed reaction is RNA(n+1) + phosphate = RNA(n) + a ribonucleoside 5'-diphosphate. Functionally, involved in mRNA degradation. Catalyzes the phosphorolysis of single-stranded polyribonucleotides processively in the 3'- to 5'-direction. The protein is Polyribonucleotide nucleotidyltransferase of Burkholderia multivorans (strain ATCC 17616 / 249).